A 290-amino-acid polypeptide reads, in one-letter code: Virginiamycin B lyase (290 aa).

H226 provides a ligand contact to substrate. E265 contacts Mg(2+). H267 functions as the Proton acceptor in the catalytic mechanism. Position 282 (E282) interacts with Mg(2+).

It belongs to the Vgb family. As to quaternary structure, monomer. It depends on Mg(2+) as a cofactor.

Functionally, inactivates the type B streptogramin antibiotics by linearizing the lactone ring at the ester linkage, generating a free phenylglycine carboxylate and converting the threonyl moiety into 2-amino-butenoic acid. The polypeptide is Virginiamycin B lyase (Mycolicibacterium vanbaalenii (strain DSM 7251 / JCM 13017 / BCRC 16820 / KCTC 9966 / NRRL B-24157 / PYR-1) (Mycobacterium vanbaalenii)).